A 1958-amino-acid polypeptide reads, in one-letter code: Autophagy-related protein 2 (1958 aa).

The Chorein N-terminal domain occupies 30 to 121; the sequence is RFLSYVLKRT…SLDTLTLDFT (92 aa). Disordered stretches follow at residues 286-319 and 360-412; these read QRKP…GNDY and LSQP…GIPV. A compositionally biased stretch (low complexity) spans 303 to 315; that stretch reads SVSSSTSTASTSS. Positions 397–406 are enriched in polar residues; it reads ETPTPETKPQ.

It belongs to the ATG2 family.

Its subcellular location is the preautophagosomal structure membrane. It localises to the endoplasmic reticulum membrane. The enzyme catalyses a 1,2-diacyl-sn-glycero-3-phosphocholine(in) = a 1,2-diacyl-sn-glycero-3-phosphocholine(out). The catalysed reaction is a 1,2-diacyl-sn-glycero-3-phospho-L-serine(in) = a 1,2-diacyl-sn-glycero-3-phospho-L-serine(out). It carries out the reaction a 1,2-diacyl-sn-glycero-3-phosphoethanolamine(in) = a 1,2-diacyl-sn-glycero-3-phosphoethanolamine(out). Its function is as follows. Lipid transfer protein required for autophagosome completion and peroxisome degradation. Tethers the edge of the isolation membrane (IM) to the endoplasmic reticulum (ER) and mediates direct lipid transfer from ER to IM for IM expansion. ATG2 binds to the ER exit site (ERES), which is the membrane source for autophagosome formation, using basic residues in its N-terminal region (NR) and to the expanding edge of the IM through its C-terminal region. The latter binding is assisted by an ATG18-PtdIns3P interaction. ATG2 then extracts phospholipids from the membrane source using its NR and transfers them to ATG9 to the IM through its predicted beta-sheet-rich structure for membrane expansion. In Cryptococcus neoformans var. neoformans serotype D (strain JEC21 / ATCC MYA-565) (Filobasidiella neoformans), this protein is Autophagy-related protein 2 (ATG2).